The sequence spans 119 residues: Ribonuclease P protein component (119 aa).

The protein belongs to the RnpA family. In terms of assembly, consists of a catalytic RNA component (M1 or rnpB) and a protein subunit.

The catalysed reaction is Endonucleolytic cleavage of RNA, removing 5'-extranucleotides from tRNA precursor.. Functionally, RNaseP catalyzes the removal of the 5'-leader sequence from pre-tRNA to produce the mature 5'-terminus. It can also cleave other RNA substrates such as 4.5S RNA. The protein component plays an auxiliary but essential role in vivo by binding to the 5'-leader sequence and broadening the substrate specificity of the ribozyme. In Mycobacterium avium (strain 104), this protein is Ribonuclease P protein component.